The primary structure comprises 100 residues: Aspartyl/glutamyl-tRNA(Asn/Gln) amidotransferase subunit C (100 aa).

Belongs to the GatC family. Heterotrimer of A, B and C subunits.

The enzyme catalyses L-glutamyl-tRNA(Gln) + L-glutamine + ATP + H2O = L-glutaminyl-tRNA(Gln) + L-glutamate + ADP + phosphate + H(+). It catalyses the reaction L-aspartyl-tRNA(Asn) + L-glutamine + ATP + H2O = L-asparaginyl-tRNA(Asn) + L-glutamate + ADP + phosphate + 2 H(+). In terms of biological role, allows the formation of correctly charged Asn-tRNA(Asn) or Gln-tRNA(Gln) through the transamidation of misacylated Asp-tRNA(Asn) or Glu-tRNA(Gln) in organisms which lack either or both of asparaginyl-tRNA or glutaminyl-tRNA synthetases. The reaction takes place in the presence of glutamine and ATP through an activated phospho-Asp-tRNA(Asn) or phospho-Glu-tRNA(Gln). This Streptococcus pneumoniae (strain P1031) protein is Aspartyl/glutamyl-tRNA(Asn/Gln) amidotransferase subunit C.